Reading from the N-terminus, the 258-residue chain is Putative L-lactate dehydrogenase operon regulatory protein (258 aa).

Residues 6 to 74 (RRLSDEVADR…RGGGTFIRWR (69 aa)) form the HTH gntR-type domain. The segment at residues 34-53 (ERQLAMQLGVSRNSLREALA) is a DNA-binding region (H-T-H motif).

Functionally, may be a regulatory protein for the LCT genes. The chain is Putative L-lactate dehydrogenase operon regulatory protein (lldR) from Escherichia coli (strain K12).